Here is a 184-residue protein sequence, read N- to C-terminus: ATP synthase subunit b, chloroplastic (184 aa).

The chain crosses the membrane as a helical span at residues 27–49; that stretch reads LATNPINLSVVLGVLIFFGKGVL.

Belongs to the ATPase B chain family. As to quaternary structure, F-type ATPases have 2 components, F(1) - the catalytic core - and F(0) - the membrane proton channel. F(1) has five subunits: alpha(3), beta(3), gamma(1), delta(1), epsilon(1). F(0) has four main subunits: a(1), b(1), b'(1) and c(10-14). The alpha and beta chains form an alternating ring which encloses part of the gamma chain. F(1) is attached to F(0) by a central stalk formed by the gamma and epsilon chains, while a peripheral stalk is formed by the delta, b and b' chains.

The protein localises to the plastid. The protein resides in the chloroplast thylakoid membrane. In terms of biological role, f(1)F(0) ATP synthase produces ATP from ADP in the presence of a proton or sodium gradient. F-type ATPases consist of two structural domains, F(1) containing the extramembraneous catalytic core and F(0) containing the membrane proton channel, linked together by a central stalk and a peripheral stalk. During catalysis, ATP synthesis in the catalytic domain of F(1) is coupled via a rotary mechanism of the central stalk subunits to proton translocation. Component of the F(0) channel, it forms part of the peripheral stalk, linking F(1) to F(0). The chain is ATP synthase subunit b, chloroplastic from Cucumis sativus (Cucumber).